The chain runs to 227 residues: Phosphoglycolate phosphatase (227 aa).

Aspartate 14 (nucleophile) is an active-site residue. Aspartate 14, aspartate 16, and aspartate 177 together coordinate Mg(2+).

This sequence belongs to the HAD-like hydrolase superfamily. CbbY/CbbZ/Gph/YieH family. Mg(2+) serves as cofactor.

The enzyme catalyses 2-phosphoglycolate + H2O = glycolate + phosphate. The protein operates within organic acid metabolism; glycolate biosynthesis; glycolate from 2-phosphoglycolate: step 1/1. Functionally, specifically catalyzes the dephosphorylation of 2-phosphoglycolate. Is involved in the dissimilation of the intracellular 2-phosphoglycolate formed during the DNA repair of 3'-phosphoglycolate ends, a major class of DNA lesions induced by oxidative stress. This Thiobacillus denitrificans (strain ATCC 25259 / T1) protein is Phosphoglycolate phosphatase.